The chain runs to 176 residues: Lipoprotein signal peptidase (176 aa).

4 consecutive transmembrane segments (helical) span residues 26 to 46, 57 to 77, 82 to 102, and 111 to 131; these read LWLA…IVIV, VTGF…SFLA, WQRW…VWLL, and FCFA…DRVI. Residues Asp-137 and Asp-155 contribute to the active site. Residues 147–167 form a helical membrane-spanning segment; it reads HWPAFNVADCAITVGAVLLIV.

It belongs to the peptidase A8 family.

Its subcellular location is the cell inner membrane. It catalyses the reaction Release of signal peptides from bacterial membrane prolipoproteins. Hydrolyzes -Xaa-Yaa-Zaa-|-(S,diacylglyceryl)Cys-, in which Xaa is hydrophobic (preferably Leu), and Yaa (Ala or Ser) and Zaa (Gly or Ala) have small, neutral side chains.. Its pathway is protein modification; lipoprotein biosynthesis (signal peptide cleavage). Functionally, this protein specifically catalyzes the removal of signal peptides from prolipoproteins. The chain is Lipoprotein signal peptidase from Cupriavidus taiwanensis (strain DSM 17343 / BCRC 17206 / CCUG 44338 / CIP 107171 / LMG 19424 / R1) (Ralstonia taiwanensis (strain LMG 19424)).